The following is a 230-amino-acid chain: MPHHIVIVEDEPVTQARLQSYFTQEGYTVSVTASGAGLREIMQNQSVDLILLDINLPDENGLMLTRALRERSTVGIILVTGRSDRIDRIVGLEMGADDYVTKPLELRELVVRVKNLLWRIDLARQAQPHTQDNCYRFAGYCLNVSRHTLERDGEPIKLTRAEYEMLVAFVTNPGEILSRERLLRMLSARRVENPDLRTVDVLIRRLRHKLSADLLVTQHGEGYFLAADVC.

The Response regulatory domain occupies 4 to 117 (HIVIVEDEPV…ELVVRVKNLL (114 aa)). D53 carries the 4-aspartylphosphate modification. The segment at residues 132–227 (DNCYRFAGYC…QHGEGYFLAA (96 aa)) is a DNA-binding region (ompR/PhoB-type).

Interacts with TorI. TorI binds to the effector domain of TorR. This interaction, which does not interfere with TorR DNA binding activity, probably prevents the recruitment of RNA polymerase to the torCAD promoter. Phosphorylated and dephosphorylated by TorS.

The protein resides in the cytoplasm. Member of the two-component regulatory system TorS/TorR involved in the anaerobic utilization of trimethylamine-N-oxide (TMAO). Phosphorylated TorR activates the transcription of the torCAD operon by binding to four decameric boxes located in the torCAD promoter. Box1, 2 and 4 contain the DNA sequence 5'-CTGTTCATAT-3' and box3 contains the DNA sequence 5'-CCGTTCATCC-3'. Phosphorylated as well as unphosphorylated TorR negatively regulates its own expression by binding to box1 and 2. The protein is TorCAD operon transcriptional regulatory protein TorR (torR) of Escherichia coli (strain K12).